A 1216-amino-acid polypeptide reads, in one-letter code: Regulator of telomere elongation helicase 1 (1216 aa).

One can recognise a Helicase ATP-binding domain in the interval 7–295 (KGVTVDFPFQ…TKVAQQAELH (289 aa)). 42 to 49 (SPTGTGKT) is an ATP binding site. The [4Fe-4S] cluster site is built by cysteine 144, cysteine 162, cysteine 171, and cysteine 206. Positions 150–166 (KKQESNHMQVHLCRRKV) match the Nuclear localization signal motif. The short motif at 249–252 (DEAH) is the DEAH box element. The Nuclear localization signal motif lies at 874-880 (QRGRRRK). Disordered regions lie at residues 978 to 1018 (GCSS…ATRQ) and 1140 to 1172 (GPGTQAPGPQEGGPAMPSDPVCEAPSPGPRKTQ). The short motif at 1172 to 1179 (QSKISSFL) is the PIP-box element.

The protein belongs to the helicase family. RAD3/XPD subfamily. Interacts with TERF1. Interacts (via PIP-box) with PCNA; the interaction is direct and essential for suppressing telomere fragility. Interacts with MMS19; the interaction mediates the association of RTEL1 with the cytosolic iron-sulfur protein assembly (CIA) complex. As to expression, highly expressed in adult testis, liver and ovary.

The protein localises to the nucleus. It catalyses the reaction ATP + H2O = ADP + phosphate + H(+). Its function is as follows. A probable ATP-dependent DNA helicase implicated in telomere-length regulation, DNA repair and the maintenance of genomic stability. Acts as an anti-recombinase to counteract toxic recombination and limit crossover during meiosis. Regulates meiotic recombination and crossover homeostasis by physically dissociating strand invasion events and thereby promotes noncrossover repair by meiotic synthesis dependent strand annealing (SDSA) as well as disassembly of D loop recombination intermediates. Also disassembles T loops and prevents telomere fragility by counteracting telomeric G4-DNA structures, which together ensure the dynamics and stability of the telomere. In Bos taurus (Bovine), this protein is Regulator of telomere elongation helicase 1.